Consider the following 158-residue polypeptide: Auxin-responsive protein IAA31 (158 aa).

Positions 1–40 are enriched in low complexity; sequence MEVSNSCSSFSSSSVDSTKPSPSESSVNLSLSLTFPSTSP. The disordered stretch occupies residues 1–49; the sequence is MEVSNSCSSFSSSSVDSTKPSPSESSVNLSLSLTFPSTSPQREARQDWP. An EAR-like (transcriptional repression) motif is present at residues 29-33; sequence LSLSL. The PB1 domain maps to 72 to 157; the sequence is SLFVKVYMEG…RRLKITRPER (86 aa).

This sequence belongs to the Aux/IAA family. As to quaternary structure, homodimers and heterodimers.

The protein localises to the nucleus. Functionally, aux/IAA proteins are short-lived transcriptional factors that function as repressors of early auxin response genes at low auxin concentrations. Repression is thought to result from the interaction with auxin response factors (ARFs), proteins that bind to the auxin-responsive promoter element (AuxRE). Formation of heterodimers with ARF proteins may alter their ability to modulate early auxin response genes expression. The protein is Auxin-responsive protein IAA31 (IAA31) of Arabidopsis thaliana (Mouse-ear cress).